We begin with the raw amino-acid sequence, 565 residues long: DNA-directed RNA polymerase subunit beta C-terminal section (565 aa).

It belongs to the RNA polymerase beta chain family. As to quaternary structure, in plastids the minimal PEP RNA polymerase catalytic core is composed of four subunits: alpha, beta, beta', and beta''. When a (nuclear-encoded) sigma factor is associated with the core the holoenzyme is formed, which can initiate transcription.

It is found in the plastid. Its subcellular location is the chloroplast. The enzyme catalyses RNA(n) + a ribonucleoside 5'-triphosphate = RNA(n+1) + diphosphate. Its function is as follows. DNA-dependent RNA polymerase catalyzes the transcription of DNA into RNA using the four ribonucleoside triphosphates as substrates. This chain is DNA-directed RNA polymerase subunit beta C-terminal section (rpoB2), found in Tetradesmus obliquus (Green alga).